We begin with the raw amino-acid sequence, 20 residues long: Putative 18 kDa spermidine-binding protein (20 aa).

As to quaternary structure, dimer of 18 kDa and 60 kDa subunit.

The protein resides in the microsome membrane. Its subcellular location is the endoplasmic reticulum membrane. May have spermidine-binding activity. This Zea mays (Maize) protein is Putative 18 kDa spermidine-binding protein.